The primary structure comprises 155 residues: Large ribosomal subunit protein eL24A (155 aa).

Residue S7 is modified to Phosphoserine. Residues E66 to R155 are disordered. Basic and acidic residues predominate over residues L89–K129. Residues A131 to Q142 show a composition bias toward polar residues.

This sequence belongs to the eukaryotic ribosomal protein eL24 family. In terms of assembly, component of the large ribosomal subunit (LSU). Mature yeast ribosomes consist of a small (40S) and a large (60S) subunit. The 40S small subunit contains 1 molecule of ribosomal RNA (18S rRNA) and 33 different proteins (encoded by 57 genes). The large 60S subunit contains 3 rRNA molecules (25S, 5.8S and 5S rRNA) and 46 different proteins (encoded by 81 genes).

It is found in the cytoplasm. In terms of biological role, component of the ribosome, a large ribonucleoprotein complex responsible for the synthesis of proteins in the cell. The small ribosomal subunit (SSU) binds messenger RNAs (mRNAs) and translates the encoded message by selecting cognate aminoacyl-transfer RNA (tRNA) molecules. The large subunit (LSU) contains the ribosomal catalytic site termed the peptidyl transferase center (PTC), which catalyzes the formation of peptide bonds, thereby polymerizing the amino acids delivered by tRNAs into a polypeptide chain. The nascent polypeptides leave the ribosome through a tunnel in the LSU and interact with protein factors that function in enzymatic processing, targeting, and the membrane insertion of nascent chains at the exit of the ribosomal tunnel. In Saccharomyces cerevisiae (strain ATCC 204508 / S288c) (Baker's yeast), this protein is Large ribosomal subunit protein eL24A.